A 316-amino-acid chain; its full sequence is Nautilin-63 (316 aa).

4 disordered regions span residues 1-26 (IPDLASSRSTLPVLTKGPTGLLGPRG), 149-173 (PFPTSRSTYGPSGSQPGKKGVVTPF), 189-238 (DSRC…GIAS), and 259-278 (PPTSPFFTGPSGYTSDGLNK). Over residues 10 to 26 (TLPVLTKGPTGLLGPRG) the composition is skewed to low complexity. Polar residues-rich tracts occupy residues 152-163 (TSRSTYGPSGSQ), 207-216 (GHSSPATLNS), and 269-278 (SGYTSDGLNK).

Glycosylated; contains mainly glucose, galactose, galactosamine, glucosamine and glucuronic acid. Component of the acid-soluble organic matrix of nacreous shell layers (at protein level).

The protein localises to the secreted. In terms of biological role, involved in nacre formation. Affects morphology of calcite crystals in vitro but does not inhibit their formation. Binds chitin. The sequence is that of Nautilin-63 from Nautilus macromphalus (Bellybutton nautilus).